The chain runs to 274 residues: Cytochrome b-c1 complex subunit Rieske, mitochondrial (274 aa).

Topologically, residues 79–103 (SHTDIKVPDFSEYRRLEVLDSTKSS) are mitochondrial matrix. A helical transmembrane segment spans residues 104 to 140 (RESSEARKGFSYLVTGVTTVGVAYAAKNAVTQFVSSM). Over 141-274 (SASADVLALA…FTSDDMVIVG (134 aa)) the chain is Mitochondrial intermembrane. The Rieske domain occupies 187–272 (EAAVELSQLR…YEFTSDDMVI (86 aa)). Cysteine 217, histidine 219, cysteine 236, histidine 239, and serine 241 together coordinate [2Fe-2S] cluster. Cysteine 222 and cysteine 238 are joined by a disulfide.

This sequence belongs to the Rieske iron-sulfur protein family. In terms of assembly, component of the ubiquinol-cytochrome c oxidoreductase (cytochrome b-c1 complex, complex III, CIII), a multisubunit enzyme composed of 11 subunits. The complex is composed of 3 respiratory subunits cytochrome b, cytochrome c1 and Rieske protein UQCRFS1, 2 core protein subunits UQCRC1/QCR1 and UQCRC2/QCR2, and 6 low-molecular weight protein subunits UQCRH/QCR6, UQCRB/QCR7, UQCRQ/QCR8, UQCR10/QCR9, UQCR11/QCR10 and subunit 9, the cleavage product of Rieske protein UQCRFS1. The complex exists as an obligatory dimer and forms supercomplexes (SCs) in the inner mitochondrial membrane with NADH-ubiquinone oxidoreductase (complex I, CI) and cytochrome c oxidase (complex IV, CIV), resulting in different assemblies (supercomplex SCI(1)III(2)IV(1) and megacomplex MCI(2)III(2)IV(2)). Incorporation of the Rieske protein UQCRFS1 is the penultimate step in complex III assembly. Interacts with TTC19, which is involved in the clearance of UQCRFS1 fragments. As to quaternary structure, component of the ubiquinol-cytochrome c oxidoreductase (cytochrome b-c1 complex, complex III, CIII). Subunit 9 corresponds to the mitochondrial targeting sequence (MTS) of Rieske protein UQCRFS1. It is retained after processing and incorporated inside complex III, where it remains bound to the complex and localizes between the 2 core subunits UQCRC1/QCR1 and UQCRC2/QCR2. [2Fe-2S] cluster is required as a cofactor. Post-translationally, proteolytic processing is necessary for the correct insertion of UQCRFS1 in the complex III dimer. Several fragments are generated during UQCRFS1 insertion, most probably due to the endogenous matrix-processing peptidase (MPP) activity of the 2 core protein subunits UQCRC1/QCR1 and UQCRC2/QCR2, which are homologous to the 2 mitochondrial-processing peptidase (MPP) subunits beta-MPP and alpha-MPP respectively. The action of the protease is also necessary for the clearance of the UQCRFS1 fragments.

Its subcellular location is the mitochondrion inner membrane. The enzyme catalyses a quinol + 2 Fe(III)-[cytochrome c](out) = a quinone + 2 Fe(II)-[cytochrome c](out) + 2 H(+)(out). Functionally, component of the ubiquinol-cytochrome c oxidoreductase, a multisubunit transmembrane complex that is part of the mitochondrial electron transport chain which drives oxidative phosphorylation. The respiratory chain contains 3 multisubunit complexes succinate dehydrogenase (complex II, CII), ubiquinol-cytochrome c oxidoreductase (cytochrome b-c1 complex, complex III, CIII) and cytochrome c oxidase (complex IV, CIV), that cooperate to transfer electrons derived from NADH and succinate to molecular oxygen, creating an electrochemical gradient over the inner membrane that drives transmembrane transport and the ATP synthase. The cytochrome b-c1 complex catalyzes electron transfer from ubiquinol to cytochrome c, linking this redox reaction to translocation of protons across the mitochondrial inner membrane, with protons being carried across the membrane as hydrogens on the quinol. In the process called Q cycle, 2 protons are consumed from the matrix, 4 protons are released into the intermembrane space and 2 electrons are passed to cytochrome c. The Rieske protein is a catalytic core subunit containing a [2Fe-2S] iron-sulfur cluster. It cycles between 2 conformational states during catalysis to transfer electrons from the quinol bound in the Q(0) site in cytochrome b to cytochrome c1. Incorporation of UQCRFS1 is the penultimate step in complex III assembly. Its function is as follows. Component of the ubiquinol-cytochrome c oxidoreductase (cytochrome b-c1 complex, complex III, CIII). UQCRFS1 undergoes proteolytic processing once it is incorporated in the complex III dimer. One of the fragments, called subunit 9, corresponds to its mitochondrial targeting sequence (MTS). The proteolytic processing is necessary for the correct insertion of UQCRFS1 in the complex III dimer, but the persistence of UQCRFS1-derived fragments may prevent newly imported UQCRFS1 to be processed and assembled into complex III and is detrimental for the complex III structure and function. This is Cytochrome b-c1 complex subunit Rieske, mitochondrial (UQCRFS1) from Gorilla gorilla gorilla (Western lowland gorilla).